A 290-amino-acid chain; its full sequence is 2-dehydro-3-deoxy-phosphogluconate/2-dehydro-3-deoxy-6-phosphogalactonate aldolase (290 aa).

Residues 42–43, 129–131, and 155–157 contribute to the substrate site; these read TT, YNY, and KDT. Lysine 155 acts as the Schiff-base intermediate with substrate in catalysis.

The protein belongs to the DapA family. KDPG aldolase subfamily. As to quaternary structure, homotetramer; dimer of dimers.

The enzyme catalyses 2-dehydro-3-deoxy-6-phospho-D-gluconate = D-glyceraldehyde 3-phosphate + pyruvate. The catalysed reaction is 2-dehydro-3-deoxy-6-phospho-D-galactonate = D-glyceraldehyde 3-phosphate + pyruvate. Its pathway is carbohydrate acid metabolism; 2-dehydro-3-deoxy-D-gluconate degradation; D-glyceraldehyde 3-phosphate and pyruvate from 2-dehydro-3-deoxy-D-gluconate: step 2/2. Functionally, involved in the degradation of glucose and galactose via the Entner-Doudoroff pathway. Catalyzes the reversible cleavage of 2-keto-3-deoxy-6-phosphogluconate (KDPG) and 2-keto-3-deoxygluconate (KDG) forming pyruvate and glyceraldehyde 3-phosphate or glyceraldehyde, respectively. It is also able to catalyze the reversible cleavage of 2-keto-3-deoxy-6-phosphogalactonate (KDPGal) and 2-keto-3-deoxygalactonate (KDGal). The chain is 2-dehydro-3-deoxy-phosphogluconate/2-dehydro-3-deoxy-6-phosphogalactonate aldolase (kdgA) from Sulfurisphaera tokodaii (strain DSM 16993 / JCM 10545 / NBRC 100140 / 7) (Sulfolobus tokodaii).